The primary structure comprises 377 residues: Beta sliding clamp (377 aa).

This sequence belongs to the beta sliding clamp family. Forms a ring-shaped head-to-tail homodimer around DNA which binds and tethers DNA polymerases and other proteins to the DNA. The DNA replisome complex has a single clamp-loading complex (3 tau and 1 each of delta, delta', psi and chi subunits) which binds 3 Pol III cores (1 core on the leading strand and 2 on the lagging strand) each with a beta sliding clamp dimer. Additional proteins in the replisome are other copies of gamma, psi and chi, Ssb, DNA helicase and RNA primase.

It is found in the cytoplasm. In terms of biological role, confers DNA tethering and processivity to DNA polymerases and other proteins. Acts as a clamp, forming a ring around DNA (a reaction catalyzed by the clamp-loading complex) which diffuses in an ATP-independent manner freely and bidirectionally along dsDNA. Initially characterized for its ability to contact the catalytic subunit of DNA polymerase III (Pol III), a complex, multichain enzyme responsible for most of the replicative synthesis in bacteria; Pol III exhibits 3'-5' exonuclease proofreading activity. The beta chain is required for initiation of replication as well as for processivity of DNA replication. This Staphylococcus aureus (strain COL) protein is Beta sliding clamp (dnaN).